The sequence spans 65 residues: Large ribosomal subunit protein bL35 (65 aa).

This sequence belongs to the bacterial ribosomal protein bL35 family.

The polypeptide is Large ribosomal subunit protein bL35 (Prochlorococcus marinus (strain MIT 9313)).